Here is a 338-residue protein sequence, read N- to C-terminus: Phenylalanine--tRNA ligase alpha subunit (338 aa).

Residue E253 participates in Mg(2+) binding.

This sequence belongs to the class-II aminoacyl-tRNA synthetase family. Phe-tRNA synthetase alpha subunit type 1 subfamily. As to quaternary structure, tetramer of two alpha and two beta subunits. It depends on Mg(2+) as a cofactor.

It is found in the cytoplasm. It catalyses the reaction tRNA(Phe) + L-phenylalanine + ATP = L-phenylalanyl-tRNA(Phe) + AMP + diphosphate + H(+). The polypeptide is Phenylalanine--tRNA ligase alpha subunit (Syntrophus aciditrophicus (strain SB)).